The sequence spans 316 residues: Beta-ketoacyl-[acyl-carrier-protein] synthase III (316 aa).

Residues C112 and H243 contribute to the active site. The segment at 244 to 248 is ACP-binding; sequence QANLR. N273 is a catalytic residue.

Belongs to the thiolase-like superfamily. FabH family. As to quaternary structure, homodimer.

It is found in the cytoplasm. The catalysed reaction is malonyl-[ACP] + acetyl-CoA + H(+) = 3-oxobutanoyl-[ACP] + CO2 + CoA. The protein operates within lipid metabolism; fatty acid biosynthesis. Functionally, catalyzes the condensation reaction of fatty acid synthesis by the addition to an acyl acceptor of two carbons from malonyl-ACP. Catalyzes the first condensation reaction which initiates fatty acid synthesis and may therefore play a role in governing the total rate of fatty acid production. Possesses both acetoacetyl-ACP synthase and acetyl transacylase activities. Its substrate specificity determines the biosynthesis of branched-chain and/or straight-chain of fatty acids. The protein is Beta-ketoacyl-[acyl-carrier-protein] synthase III of Actinobacillus succinogenes (strain ATCC 55618 / DSM 22257 / CCUG 43843 / 130Z).